A 122-amino-acid chain; its full sequence is UPF0382 membrane protein SE_0353 (122 aa).

The next 4 membrane-spanning stretches (helical) occupy residues 3-23 (VFIILGALNAMMAVGTGAFGA), 46-66 (MYHGLGLLVIGLISGTTSINV), 69-89 (AGWLLFFGIVFFSGSLYFLAL), and 98-118 (ITPIGGVLFIIGWLVLVIATL).

It belongs to the UPF0382 family.

Its subcellular location is the cell membrane. The chain is UPF0382 membrane protein SE_0353 from Staphylococcus epidermidis (strain ATCC 12228 / FDA PCI 1200).